A 155-amino-acid polypeptide reads, in one-letter code: Small ribosomal subunit protein uS9 (155 aa).

Belongs to the universal ribosomal protein uS9 family.

The polypeptide is Small ribosomal subunit protein uS9 (Sinorhizobium fredii (strain NBRC 101917 / NGR234)).